The chain runs to 312 residues: Ribonuclease HIII (312 aa).

Residues 95–311 enclose the RNase H type-2 domain; it reads FNCIGSDEAG…REKAQKILKP (217 aa). A divalent metal cation-binding residues include D101, E102, and D206.

It belongs to the RNase HII family. RnhC subfamily. Mn(2+) is required as a cofactor. Requires Mg(2+) as cofactor.

Its subcellular location is the cytoplasm. It carries out the reaction Endonucleolytic cleavage to 5'-phosphomonoester.. Endonuclease that specifically degrades the RNA of RNA-DNA hybrids. The polypeptide is Ribonuclease HIII (Staphylococcus aureus (strain MW2)).